The following is a 153-amino-acid chain: 17.6 kDa class I heat shock protein (153 aa).

The 116-residue stretch at 38-153 (ETAAIVNARI…PMVKAIDISG (116 aa)) folds into the sHSP domain.

Belongs to the small heat shock protein (HSP20) family. In terms of assembly, forms oligomeric structures.

The protein resides in the cytoplasm. This chain is 17.6 kDa class I heat shock protein (HSP17.6), found in Helianthus annuus (Common sunflower).